A 214-amino-acid polypeptide reads, in one-letter code: Transcriptional regulatory protein MctR (214 aa).

In terms of domain architecture, Response regulatory spans 8 to 124; sequence RVLLIDNHPL…EIVSAIETVA (117 aa). Asp-59 carries the post-translational modification 4-aspartylphosphate. One can recognise an HTH luxR-type domain in the interval 143–208; the sequence is VEEGSDPLTP…GLIRYALDHG (66 aa). The H-T-H motif DNA-binding region spans 167-186; it reads NKEIAETLGITSATAETHRK.

It localises to the cytoplasm. Functionally, member of the two-component regulatory system MctS/MctR, which activates mctP expression. This Rhizobium johnstonii (strain DSM 114642 / LMG 32736 / 3841) (Rhizobium leguminosarum bv. viciae) protein is Transcriptional regulatory protein MctR.